The sequence spans 1015 residues: Putative calcium-transporting ATPase 7, plasma membrane-type (1015 aa).

N-acetylmethionine is present on methionine 1. Over 1–161 (MESYLNSNFD…NKFAESELRS (161 aa)) the chain is Cytoplasmic. The interval 20–31 (VLEKWRNLCSVV) is interaction with calmodulin. The residue at position 45 (serine 45) is a Phosphoserine; by CPK. A helical transmembrane segment spans residues 162 to 182 (FWVFVWEALQDMTLMILGVCA). Topologically, residues 183–200 (FVSLIVGIATEGWPQGSH) are lumenal. Residues 201-221 (DGLGIVASILLVVFVTATSDY) form a helical membrane-spanning segment. At 222-349 (RQSLQFRDLD…DDETPLQVKL (128 aa)) the chain is on the cytoplasmic side. Residues 350–369 (NGVATIIGKIGLSFAIVTFA) form a helical membrane-spanning segment. At 370–399 (VLVQGMFMRKLSLGPHWWWSGDDALELLEY) the chain is on the lumenal side. A helical transmembrane segment spans residues 400-417 (FAIAVTIVVVAVPEGLPL). At 418–811 (AVTLSLAFAM…KWGRSVYINI (394 aa)) the chain is on the cytoplasmic side. Aspartate 455 acts as the 4-aspartylphosphate intermediate in catalysis. Mg(2+) contacts are provided by aspartate 756 and aspartate 760. A helical membrane pass occupies residues 812-830 (QKFVQFQLTVNVVALIVNF). The Lumenal portion of the chain corresponds to 831–841 (SSACLTGSAPL). The helical transmembrane segment at 842–862 (TAVQLLWVNMIMDTLGALALA) threads the bilayer. Residues 863–882 (TEPPNNELMKRMPVGRRGNF) are Cytoplasmic-facing. Residues 883–905 (ITNAMWRNILGQAVYQFIIIWIL) traverse the membrane as a helical segment. Over 906–917 (QAKGKSMFGLVG) the chain is Lumenal. The chain crosses the membrane as a helical span at residues 918–939 (SDSTLVLNTLIFNCFVFCQVFN). Over 940-957 (EVSSREMEEIDVFKGILD) the chain is Cytoplasmic. The helical transmembrane segment at 958–979 (NYVFVVVIGATVFFQIIIIEFL) threads the bilayer. At 980 to 989 (GTFASTTPLT) the chain is on the lumenal side. A helical transmembrane segment spans residues 990–1011 (IVQWFFSIFVGFLGMPIAAGLK). At 1012-1015 (KIPV) the chain is on the cytoplasmic side.

The protein belongs to the cation transport ATPase (P-type) (TC 3.A.3) family. Type IIB subfamily.

It localises to the membrane. The catalysed reaction is Ca(2+)(in) + ATP + H2O = Ca(2+)(out) + ADP + phosphate + H(+). Its activity is regulated as follows. Activated by calmodulin. Its function is as follows. This magnesium-dependent enzyme catalyzes the hydrolysis of ATP coupled with the translocation of calcium from the cytosol out of the cell or into organelles. This Arabidopsis thaliana (Mouse-ear cress) protein is Putative calcium-transporting ATPase 7, plasma membrane-type (ACA7).